Consider the following 345-residue polypeptide: Fructose-1,6-bisphosphatase class 1 (345 aa).

The Mg(2+) site is built by glutamate 90, aspartate 109, leucine 111, and aspartate 112. Substrate contacts are provided by residues 112-115 and asparagine 200; that span reads DGSS. Mg(2+) is bound at residue glutamate 272.

The protein belongs to the FBPase class 1 family. In terms of assembly, homotetramer. It depends on Mg(2+) as a cofactor.

It localises to the cytoplasm. It carries out the reaction beta-D-fructose 1,6-bisphosphate + H2O = beta-D-fructose 6-phosphate + phosphate. Its pathway is carbohydrate biosynthesis; gluconeogenesis. The sequence is that of Fructose-1,6-bisphosphatase class 1 from Bradyrhizobium diazoefficiens (strain JCM 10833 / BCRC 13528 / IAM 13628 / NBRC 14792 / USDA 110).